A 483-amino-acid chain; its full sequence is tRNA sulfurtransferase (483 aa).

One can recognise a THUMP domain in the interval 61–165 (PLVADALTLI…NDRLLLITER (105 aa)). Residues 183-184 (LI), lysine 265, glycine 287, and glutamine 296 each bind ATP. Cysteines 344 and 457 form a disulfide. One can recognise a Rhodanese domain in the interval 405-483 (LGSGDVVLDI…GFQNVKVYRP (79 aa)). Cysteine 457 acts as the Cysteine persulfide intermediate in catalysis.

This sequence belongs to the ThiI family.

The protein resides in the cytoplasm. The catalysed reaction is [ThiI sulfur-carrier protein]-S-sulfanyl-L-cysteine + a uridine in tRNA + 2 reduced [2Fe-2S]-[ferredoxin] + ATP + H(+) = [ThiI sulfur-carrier protein]-L-cysteine + a 4-thiouridine in tRNA + 2 oxidized [2Fe-2S]-[ferredoxin] + AMP + diphosphate. It catalyses the reaction [ThiS sulfur-carrier protein]-C-terminal Gly-Gly-AMP + S-sulfanyl-L-cysteinyl-[cysteine desulfurase] + AH2 = [ThiS sulfur-carrier protein]-C-terminal-Gly-aminoethanethioate + L-cysteinyl-[cysteine desulfurase] + A + AMP + 2 H(+). It participates in cofactor biosynthesis; thiamine diphosphate biosynthesis. Catalyzes the ATP-dependent transfer of a sulfur to tRNA to produce 4-thiouridine in position 8 of tRNAs, which functions as a near-UV photosensor. Also catalyzes the transfer of sulfur to the sulfur carrier protein ThiS, forming ThiS-thiocarboxylate. This is a step in the synthesis of thiazole, in the thiamine biosynthesis pathway. The sulfur is donated as persulfide by IscS. The chain is tRNA sulfurtransferase from Sodalis glossinidius (strain morsitans).